The chain runs to 117 residues: Ig heavy chain V region G4 (117 aa).

Residues 1–19 (MTHWLCFTLALVAVRGVLS) form the signal peptide. The interval 20–49 (EIQLVESGGAIRKPGDSLRLSCKASGFTFS) is framework-1. Cys41 and Cys115 are disulfide-bonded. The complementarity-determining-1 stretch occupies residues 50 to 54 (DTWMA). A framework-2 region spans residues 55–68 (WARQPPGKGLQWVG). The interval 69-85 (EINGNSETIRYAPEVKG) is complementarity-determining-2. The tract at residues 86-117 (RLTISRDNTQNLLFLQISSLKPEDTATYYCAR) is framework-3.

In Caiman crocodilus (Spectacled caiman), this protein is Ig heavy chain V region G4 (G4).